The sequence spans 242 residues: Probable transcriptional regulatory protein PXO_01555 (242 aa).

Belongs to the TACO1 family.

It localises to the cytoplasm. This is Probable transcriptional regulatory protein PXO_01555 from Xanthomonas oryzae pv. oryzae (strain PXO99A).